A 37-amino-acid chain; its full sequence is Large ribosomal subunit protein bL36 (37 aa).

The protein belongs to the bacterial ribosomal protein bL36 family.

The sequence is that of Large ribosomal subunit protein bL36 from Magnetococcus marinus (strain ATCC BAA-1437 / JCM 17883 / MC-1).